We begin with the raw amino-acid sequence, 619 residues long: Chaperone protein DnaK (619 aa).

Phosphothreonine; by autocatalysis is present on T175. The disordered stretch occupies residues 578–619 (NGGAQGQGFDPNNMGGANAGAGATNNNDDNVVDADFEVQDDK). Over residues 589 to 606 (NNMGGANAGAGATNNNDD) the composition is skewed to low complexity. Positions 607–619 (NVVDADFEVQDDK) are enriched in acidic residues.

It belongs to the heat shock protein 70 family.

In terms of biological role, acts as a chaperone. This Clostridium perfringens (strain ATCC 13124 / DSM 756 / JCM 1290 / NCIMB 6125 / NCTC 8237 / Type A) protein is Chaperone protein DnaK.